The sequence spans 66 residues: Photosystem II reaction center protein J (66 aa).

The segment at M1–A23 is disordered. The chain crosses the membrane as a helical span at residues L37–Y57.

This sequence belongs to the PsbJ family. In terms of assembly, PSII is composed of 1 copy each of membrane proteins PsbA, PsbB, PsbC, PsbD, PsbE, PsbF, PsbH, PsbI, PsbJ, PsbK, PsbL, PsbM, PsbT, PsbX, PsbY, PsbZ, Psb30/Ycf12, peripheral proteins PsbO, CyanoQ (PsbQ), PsbU, PsbV and a large number of cofactors. It forms dimeric complexes.

The protein resides in the cellular thylakoid membrane. Functionally, one of the components of the core complex of photosystem II (PSII). PSII is a light-driven water:plastoquinone oxidoreductase that uses light energy to abstract electrons from H(2)O, generating O(2) and a proton gradient subsequently used for ATP formation. It consists of a core antenna complex that captures photons, and an electron transfer chain that converts photonic excitation into a charge separation. The polypeptide is Photosystem II reaction center protein J (Parasynechococcus marenigrum (strain WH8102)).